The chain runs to 95 residues: Co-chaperonin GroES (95 aa).

It belongs to the GroES chaperonin family. In terms of assembly, heptamer of 7 subunits arranged in a ring. Interacts with the chaperonin GroEL.

It localises to the cytoplasm. Together with the chaperonin GroEL, plays an essential role in assisting protein folding. The GroEL-GroES system forms a nano-cage that allows encapsulation of the non-native substrate proteins and provides a physical environment optimized to promote and accelerate protein folding. GroES binds to the apical surface of the GroEL ring, thereby capping the opening of the GroEL channel. This chain is Co-chaperonin GroES, found in Dichelobacter nodosus (strain VCS1703A).